A 432-amino-acid polypeptide reads, in one-letter code: uncharacterized protein (432 aa).

2 SIS domains span residues 105 to 244 (WLTE…DLVS) and 277 to 422 (CDKK…VDLP).

This is an uncharacterized protein from Saccharomyces cerevisiae (strain ATCC 204508 / S288c) (Baker's yeast).